Here is a 303-residue protein sequence, read N- to C-terminus: 4-diphosphocytidyl-2-C-methyl-D-erythritol kinase (303 aa).

The active site involves Lys-21. 106–116 is a binding site for ATP; it reads PVAAGIGGGSA. Residue Asp-148 is part of the active site.

The protein belongs to the GHMP kinase family. IspE subfamily.

The enzyme catalyses 4-CDP-2-C-methyl-D-erythritol + ATP = 4-CDP-2-C-methyl-D-erythritol 2-phosphate + ADP + H(+). It functions in the pathway isoprenoid biosynthesis; isopentenyl diphosphate biosynthesis via DXP pathway; isopentenyl diphosphate from 1-deoxy-D-xylulose 5-phosphate: step 3/6. Its function is as follows. Catalyzes the phosphorylation of the position 2 hydroxy group of 4-diphosphocytidyl-2C-methyl-D-erythritol. The protein is 4-diphosphocytidyl-2-C-methyl-D-erythritol kinase of Nitrobacter hamburgensis (strain DSM 10229 / NCIMB 13809 / X14).